Reading from the N-terminus, the 129-residue chain is Prefoldin subunit 6 (129 aa).

Position 2 is an N-acetylalanine (alanine 2). Position 21 is an N6-acetyllysine (lysine 21). Lysine 66 carries the post-translational modification N6-acetyllysine; alternate. A Glycyl lysine isopeptide (Lys-Gly) (interchain with G-Cter in SUMO1); alternate cross-link involves residue lysine 66. Lysine 66 is covalently cross-linked (Glycyl lysine isopeptide (Lys-Gly) (interchain with G-Cter in SUMO2); alternate).

This sequence belongs to the prefoldin subunit beta family. As to quaternary structure, heterohexamer of two PFD-alpha type and four PFD-beta type subunits. Component of the PAQosome complex which is responsible for the biogenesis of several protein complexes and which consists of R2TP complex members RUVBL1, RUVBL2, RPAP3 and PIH1D1, URI complex members PFDN2, PFDN6, PDRG1, UXT and URI1 as well as ASDURF, POLR2E and DNAAF10/WDR92.

Binds specifically to cytosolic chaperonin (c-CPN) and transfers target proteins to it. Binds to nascent polypeptide chain and promotes folding in an environment in which there are many competing pathways for nonnative proteins. The polypeptide is Prefoldin subunit 6 (PFDN6) (Canis lupus familiaris (Dog)).